The sequence spans 346 residues: Rhomboid protein 1, mitochondrial (346 aa).

The N-terminal 73 residues, 1 to 73 (MSGVSSVMLG…RFFSQTSILK (73 aa)), are a transit peptide targeting the mitochondrion. 6 helical membrane-spanning segments follow: residues 109–129 (SMTI…PYLF), 145–165 (LVYA…LPKC), 203–223 (MLAL…SNFF), 246–266 (LAIV…LGCF), 275–295 (ILLF…ASVA), and 308–328 (FDYA…WYIS). Catalysis depends on Ser-256, which acts as the Nucleophile. His-313 is a catalytic residue.

Belongs to the peptidase S54 family.

It localises to the mitochondrion inner membrane. The catalysed reaction is Cleaves type-1 transmembrane domains using a catalytic dyad composed of serine and histidine that are contributed by different transmembrane domains.. Its function is as follows. Mitochondrial rhomboid serine protease processing the mitochondrial membrane fusion regulator MGM1, and the cytochrome c peroxidase (CCP1). Required for TIM11 stability, ATP synthase complex assembly, mitochondrial morphology, cytochrome c (CYC1) storage and mitochondrial genome maintenance. The polypeptide is Rhomboid protein 1, mitochondrial (PCP1) (Saccharomyces cerevisiae (strain ATCC 204508 / S288c) (Baker's yeast)).